Here is a 303-residue protein sequence, read N- to C-terminus: 5'-3' exonuclease (303 aa).

The 5'-3' exonuclease domain maps to 179–262 (ISPAQWVDVK…LATITTEIEA (84 aa)).

Its function is as follows. 5'-3' exonuclease acting preferentially on double-stranded DNA. The polypeptide is 5'-3' exonuclease (Halalkalibacterium halodurans (strain ATCC BAA-125 / DSM 18197 / FERM 7344 / JCM 9153 / C-125) (Bacillus halodurans)).